We begin with the raw amino-acid sequence, 860 residues long: Leucine--tRNA ligase (860 aa).

The 'HIGH' region motif lies at P42–H52. Residues K619–S623 carry the 'KMSKS' region motif. K622 provides a ligand contact to ATP.

Belongs to the class-I aminoacyl-tRNA synthetase family.

It is found in the cytoplasm. The catalysed reaction is tRNA(Leu) + L-leucine + ATP = L-leucyl-tRNA(Leu) + AMP + diphosphate. This chain is Leucine--tRNA ligase, found in Shigella dysenteriae serotype 1 (strain Sd197).